Reading from the N-terminus, the 368-residue chain is tRNA/tmRNA (uracil-C(5))-methyltransferase (368 aa).

S-adenosyl-L-methionine is bound by residues Q192, Y220, N225, E241, and D301. The Nucleophile role is filled by C326. E360 functions as the Proton acceptor in the catalytic mechanism.

This sequence belongs to the class I-like SAM-binding methyltransferase superfamily. RNA M5U methyltransferase family. TrmA subfamily.

The enzyme catalyses uridine(54) in tRNA + S-adenosyl-L-methionine = 5-methyluridine(54) in tRNA + S-adenosyl-L-homocysteine + H(+). It carries out the reaction uridine(341) in tmRNA + S-adenosyl-L-methionine = 5-methyluridine(341) in tmRNA + S-adenosyl-L-homocysteine + H(+). Functionally, dual-specificity methyltransferase that catalyzes the formation of 5-methyluridine at position 54 (m5U54) in all tRNAs, and that of position 341 (m5U341) in tmRNA (transfer-mRNA). In Actinobacillus pleuropneumoniae serotype 7 (strain AP76), this protein is tRNA/tmRNA (uracil-C(5))-methyltransferase.